A 213-amino-acid polypeptide reads, in one-letter code: RNA polymerase I subunit H (213 aa).

Basic and acidic residues predominate over residues 1 to 19 (MVERMKKDTGDETKTKVQE). Residues 1–70 (MVERMKKDTG…AREFTDKPWR (70 aa)) form a disordered region. Residues 21–31 (PPSPSPPPPPP) are compositionally biased toward pro residues. Composition is skewed to basic and acidic residues over residues 43–53 (VPEREKKQIER) and 60–69 (HAREFTDKPW).

Expressed during spermatogenesis, initially at pachytene stage with abundance increasing in round spermatids and decreasing again during spermatid elongation.

May be involved in male sterility. The sequence is that of RNA polymerase I subunit H from Mus musculus (Mouse).